A 525-amino-acid chain; its full sequence is GMP synthase [glutamine-hydrolyzing] (525 aa).

Residues 9-207 (RILILDFGSQ…VLDICACEAL (199 aa)) form the Glutamine amidotransferase type-1 domain. The Nucleophile role is filled by Cys86. Active-site residues include His181 and Glu183. Residues 208–400 (WTPATIIEDA…LGLPYDMLYR (193 aa)) enclose the GMPS ATP-PPase domain. 235-241 (SGGVDSS) contributes to the ATP binding site.

As to quaternary structure, homodimer.

It catalyses the reaction XMP + L-glutamine + ATP + H2O = GMP + L-glutamate + AMP + diphosphate + 2 H(+). The protein operates within purine metabolism; GMP biosynthesis; GMP from XMP (L-Gln route): step 1/1. Catalyzes the synthesis of GMP from XMP. The sequence is that of GMP synthase [glutamine-hydrolyzing] from Yersinia enterocolitica serotype O:8 / biotype 1B (strain NCTC 13174 / 8081).